A 151-amino-acid chain; its full sequence is uncharacterized protein (151 aa).

Residues 35–147 are a coiled coil; sequence GIFENERQKL…RETLQESLED (113 aa).

This is an uncharacterized protein from Helicobacter hepaticus (strain ATCC 51449 / 3B1).